The following is a 211-amino-acid chain: Arginine exporter protein ArgO (211 aa).

Helical transmembrane passes span 1–21 (MISYYFQGFALGAAMILPLGP), 37–57 (LMIALLCALSDLVLISAGIFG), 68–88 (LLALVTWGGVAFLLWYGFGAL), 111–131 (IIATMLAVTWLNPHVYLDTFV), 147–167 (WFALGTISASFLWFFGLALLA), and 179–199 (AQRIINILVGVVMWLIAFQLA).

The protein belongs to the LysE/ArgO transporter (TC 2.A.75) family.

The protein resides in the cell inner membrane. It carries out the reaction L-arginine(in) = L-arginine(out). In terms of biological role, involved in the export of arginine. Important to control the intracellular level of arginine and the correct balance between arginine and lysine. The protein is Arginine exporter protein ArgO of Salmonella paratyphi C (strain RKS4594).